We begin with the raw amino-acid sequence, 573 residues long: DNA ligase (573 aa).

Glu250 provides a ligand contact to ATP. Lys252 acts as the N6-AMP-lysine intermediate in catalysis. 6 residues coordinate ATP: Arg257, Arg272, Glu301, Phe342, Arg432, and Lys438.

Belongs to the ATP-dependent DNA ligase family. The cofactor is Mg(2+).

It catalyses the reaction ATP + (deoxyribonucleotide)n-3'-hydroxyl + 5'-phospho-(deoxyribonucleotide)m = (deoxyribonucleotide)n+m + AMP + diphosphate.. Functionally, DNA ligase that seals nicks in double-stranded DNA during DNA replication, DNA recombination and DNA repair. The polypeptide is DNA ligase (Methanococcus maripaludis (strain C7 / ATCC BAA-1331)).